The chain runs to 175 residues: ATP-dependent protease subunit HslV (175 aa).

T2 is a catalytic residue. Residues A156, C159, and T162 each contribute to the Na(+) site.

It belongs to the peptidase T1B family. HslV subfamily. A double ring-shaped homohexamer of HslV is capped on each side by a ring-shaped HslU homohexamer. The assembly of the HslU/HslV complex is dependent on binding of ATP.

The protein localises to the cytoplasm. It carries out the reaction ATP-dependent cleavage of peptide bonds with broad specificity.. Allosterically activated by HslU binding. Functionally, protease subunit of a proteasome-like degradation complex believed to be a general protein degrading machinery. This Rhizobium etli (strain CIAT 652) protein is ATP-dependent protease subunit HslV.